Reading from the N-terminus, the 255-residue chain is 3-dehydroquinate dehydratase (255 aa).

3-dehydroquinate-binding positions include 46–48 and Arg82; that span reads EWR. His143 functions as the Proton donor/acceptor in the catalytic mechanism. Lys170 functions as the Schiff-base intermediate with substrate in the catalytic mechanism. The 3-dehydroquinate site is built by Arg213, Ser232, and Gln236.

The protein belongs to the type-I 3-dehydroquinase family. Homodimer.

It carries out the reaction 3-dehydroquinate = 3-dehydroshikimate + H2O. It participates in metabolic intermediate biosynthesis; chorismate biosynthesis; chorismate from D-erythrose 4-phosphate and phosphoenolpyruvate: step 3/7. Functionally, involved in the third step of the chorismate pathway, which leads to the biosynthesis of aromatic amino acids. Catalyzes the cis-dehydration of 3-dehydroquinate (DHQ) and introduces the first double bond of the aromatic ring to yield 3-dehydroshikimate. The protein is 3-dehydroquinate dehydratase of Bacillus subtilis (strain 168).